A 306-amino-acid polypeptide reads, in one-letter code: Ribonuclease Z (306 aa).

Residues His63, His65, Asp67, His68, His141, Asp211, and His269 each coordinate Zn(2+). The active-site Proton acceptor is Asp67.

The protein belongs to the RNase Z family. In terms of assembly, homodimer. It depends on Zn(2+) as a cofactor.

The catalysed reaction is Endonucleolytic cleavage of RNA, removing extra 3' nucleotides from tRNA precursor, generating 3' termini of tRNAs. A 3'-hydroxy group is left at the tRNA terminus and a 5'-phosphoryl group is left at the trailer molecule.. Zinc phosphodiesterase, which displays some tRNA 3'-processing endonuclease activity. Probably involved in tRNA maturation, by removing a 3'-trailer from precursor tRNA. This is Ribonuclease Z from Staphylococcus carnosus (strain TM300).